A 340-amino-acid polypeptide reads, in one-letter code: Probable serine acetyltransferase 5 (340 aa).

2 stretches are compositionally biased toward low complexity: residues 1 to 17 (MLVVVARKSSSSARVAA) and 54 to 64 (PAEVVPAFAPP). Residues 1 to 67 (MLVVVARKSS…VPAFAPPESE (67 aa)) form a disordered region.

This sequence belongs to the transferase hexapeptide repeat family. Homomultimer.

It carries out the reaction L-serine + acetyl-CoA = O-acetyl-L-serine + CoA. It functions in the pathway amino-acid biosynthesis; L-cysteine biosynthesis; L-cysteine from L-serine: step 1/2. The polypeptide is Probable serine acetyltransferase 5 (SAT5) (Oryza sativa subsp. japonica (Rice)).